A 79-amino-acid polypeptide reads, in one-letter code: Acyl carrier protein (79 aa).

One can recognise a Carrier domain in the interval 2–77; sequence SEIGERVKKI…DATKFLEKNA (76 aa). S37 is subject to O-(pantetheine 4'-phosphoryl)serine.

This sequence belongs to the acyl carrier protein (ACP) family. In terms of processing, 4'-phosphopantetheine is transferred from CoA to a specific serine of apo-ACP by AcpS. This modification is essential for activity because fatty acids are bound in thioester linkage to the sulfhydryl of the prosthetic group.

Its subcellular location is the cytoplasm. It participates in lipid metabolism; fatty acid biosynthesis. In terms of biological role, carrier of the growing fatty acid chain in fatty acid biosynthesis. The chain is Acyl carrier protein from Rhodopseudomonas palustris (strain HaA2).